A 347-amino-acid polypeptide reads, in one-letter code: NADH-ubiquinone oxidoreductase chain 2 (347 aa).

The next 9 helical transmembrane spans lie at 5–22, 26–45, 60–80, 150–170, 178–198, 200–220, 237–257, 274–294, and 327–347; these read ILAI…MVLI, WLTI…PILM, FLTQ…NLLL, NPNL…WGGL, ILAY…TYNP, LMLL…MLFM, LPLI…LPPL, DMAI…YFYM, and PPLI…LTLF.

This sequence belongs to the complex I subunit 2 family. In terms of assembly, core subunit of respiratory chain NADH dehydrogenase (Complex I) which is composed of 45 different subunits. Interacts with TMEM242.

The protein resides in the mitochondrion inner membrane. It catalyses the reaction a ubiquinone + NADH + 5 H(+)(in) = a ubiquinol + NAD(+) + 4 H(+)(out). In terms of biological role, core subunit of the mitochondrial membrane respiratory chain NADH dehydrogenase (Complex I) which catalyzes electron transfer from NADH through the respiratory chain, using ubiquinone as an electron acceptor. Essential for the catalytic activity and assembly of complex I. This is NADH-ubiquinone oxidoreductase chain 2 from Martes zibellina (Sable).